The chain runs to 150 residues: Probable cyclase FGR4 (150 aa).

Its pathway is secondary metabolite biosynthesis. Probable cyclase; part of the gene cluster that mediates the biosynthesis of the tetraketides fugralins such as linear fugralin A and cyclic fugralin B, volatile compounds that play a role in the asexual reproductive cycle but are not involved in pathogenicity. Fugralin B is similar to fugralin A except for a cyclization between the carboxylic acid C-8 and the alcohol on C-4 resulting in a six membered lactone ring, probably catalyzed by the cyclase FGR4. One of the key features of fugralins is the presence of a double methyl group, which is only rarely encountered in fungal secondary metabolites. As the fugralins cluster does not contain an independent methyltransferase, the PKS FGR1 is probably responsible for adding two methyl groups to the same carbon atom. The exact role of the individual cluster genes remains unknown and further work is needed to unravel the biosynthetic pathway. The chain is Probable cyclase FGR4 from Gibberella zeae (strain ATCC MYA-4620 / CBS 123657 / FGSC 9075 / NRRL 31084 / PH-1) (Wheat head blight fungus).